The chain runs to 429 residues: Endo-1,4-beta-xylanase 1 (429 aa).

An N-terminal signal peptide occupies residues M1–A19. The region spanning N43–V336 is the GH10 domain. The active-site Proton donor is E150. E257 acts as the Nucleophile in catalysis. C286 and C292 are disulfide-bonded. Positions T364–Q395 are disordered. The span at S371 to S389 shows a compositional bias: low complexity. In terms of domain architecture, CBM1 spans P393–L429.

Belongs to the glycosyl hydrolase 10 (cellulase F) family.

The protein resides in the secreted. The enzyme catalyses Endohydrolysis of (1-&gt;4)-beta-D-xylosidic linkages in xylans.. It participates in glycan degradation; xylan degradation. In terms of biological role, endo-1,4-beta-xylanase involved in the hydrolysis of xylan, a major structural heterogeneous polysaccharide found in plant biomass representing the second most abundant polysaccharide in the biosphere, after cellulose. This chain is Endo-1,4-beta-xylanase 1, found in Humicola insolens (Soft-rot fungus).